A 374-amino-acid polypeptide reads, in one-letter code: Probable dual-specificity RNA methyltransferase RlmN (374 aa).

Glutamate 108 (proton acceptor) is an active-site residue. The Radical SAM core domain maps to 114 to 361 (YSDRNTVCIS…SCTVRDTRGR (248 aa)). Cysteine 121 and cysteine 367 are joined by a disulfide. Positions 128, 132, and 135 each coordinate [4Fe-4S] cluster. S-adenosyl-L-methionine contacts are provided by residues 188–189 (GE), serine 222, 245–247 (SLH), and asparagine 324. Cysteine 367 acts as the S-methylcysteine intermediate in catalysis.

The protein belongs to the radical SAM superfamily. RlmN family. It depends on [4Fe-4S] cluster as a cofactor.

It is found in the cytoplasm. It catalyses the reaction adenosine(2503) in 23S rRNA + 2 reduced [2Fe-2S]-[ferredoxin] + 2 S-adenosyl-L-methionine = 2-methyladenosine(2503) in 23S rRNA + 5'-deoxyadenosine + L-methionine + 2 oxidized [2Fe-2S]-[ferredoxin] + S-adenosyl-L-homocysteine. The enzyme catalyses adenosine(37) in tRNA + 2 reduced [2Fe-2S]-[ferredoxin] + 2 S-adenosyl-L-methionine = 2-methyladenosine(37) in tRNA + 5'-deoxyadenosine + L-methionine + 2 oxidized [2Fe-2S]-[ferredoxin] + S-adenosyl-L-homocysteine. Functionally, specifically methylates position 2 of adenine 2503 in 23S rRNA and position 2 of adenine 37 in tRNAs. This is Probable dual-specificity RNA methyltransferase RlmN from Mycobacterium sp. (strain JLS).